The chain runs to 344 residues: Aurora kinase B (344 aa).

The residue at position 35 (T35) is a Phosphothreonine. S62 is subject to Phosphoserine. The residue at position 64 (T64) is a Phosphothreonine. Residues 77 to 327 (FEIGRPLGKG…LAQVSAHPWV (251 aa)) form the Protein kinase domain. Residues 83 to 91 (LGKGKFGNV) and K106 contribute to the ATP site. The active-site Proton acceptor is the D200. An N6-acetyllysine modification is found at K215. Residue S227 is modified to Phosphoserine. T232 carries the phosphothreonine; by autocatalysis modification.

The protein belongs to the protein kinase superfamily. Ser/Thr protein kinase family. Aurora subfamily. In terms of assembly, component of the chromosomal passenger complex (CPC) composed of at least BIRC5/survivin, CDCA8/borealin, INCENP, AURKB or AURKC; predominantly independent AURKB- and AURKC-containing complexes exist. Associates with RACGAP1 during M phase. Interacts with SPDYC; this interaction may be required for proper localization of active, Thr-232-phosphorylated AURKB form during prometaphase and metaphase. Interacts with p53/TP53. Interacts (via the middle kinase domain) with NOC2L (via the N- and C-terminus domains). Interacts with CDCA1. Interacts with EVI5. Interacts with JTB. Interacts with NDC80. Interacts with PSMA3. Interacts with RNF2/RING1B. Interacts with SEPTIN1. Interacts with SIRT2. Interacts with TACC1. Interacts with TTC28. Post-translationally, the phosphorylation of Thr-232 requires the binding to INCENP and occurs by means of an autophosphorylation mechanism. Thr-232 phosphorylation is indispensable for the AURKB kinase activity. Acetylated at Lys-215 by KAT5 at kinetochores, increasing AURKB activity and promoting accurate chromosome segregation in mitosis. In terms of processing, ubiquitinated by different BCR (BTB-CUL3-RBX1) E3 ubiquitin ligase complexes. Ubiquitinated by the BCR(KLHL9-KLHL13) E3 ubiquitin ligase complex, ubiquitination leads to removal from mitotic chromosomes and is required for cytokinesis. During anaphase, the BCR(KLHL21) E3 ubiquitin ligase complex recruits the CPC complex from chromosomes to the spindle midzone and mediates the ubiquitination of AURKB. Ubiquitination of AURKB by BCR(KLHL21) E3 ubiquitin ligase complex may not lead to its degradation by the proteasome. Deubiquitinated by USP35; inhibiting CDH1-mediated degradation of AURKB.

The protein resides in the nucleus. The protein localises to the chromosome. It is found in the centromere. It localises to the kinetochore. Its subcellular location is the cytoplasm. The protein resides in the cytoskeleton. The protein localises to the spindle. It is found in the midbody. The catalysed reaction is L-seryl-[protein] + ATP = O-phospho-L-seryl-[protein] + ADP + H(+). It carries out the reaction L-threonyl-[protein] + ATP = O-phospho-L-threonyl-[protein] + ADP + H(+). With respect to regulation, activity is greatly increased when AURKB is within the CPC complex. In particular, AURKB-phosphorylated INCENP acts as an activator of AURKB. Positive feedback between HASPIN and AURKB contributes to CPC localization. Functionally, serine/threonine-protein kinase component of the chromosomal passenger complex (CPC), a complex that acts as a key regulator of mitosis. The CPC complex has essential functions at the centromere in ensuring correct chromosome alignment and segregation and is required for chromatin-induced microtubule stabilization and spindle assembly. Involved in the bipolar attachment of spindle microtubules to kinetochores and is a key regulator for the onset of cytokinesis during mitosis. Required for central/midzone spindle assembly and cleavage furrow formation. Key component of the cytokinesis checkpoint, a process required to delay abscission to prevent both premature resolution of intercellular chromosome bridges and accumulation of DNA damage: phosphorylates CHMP4C, leading to retain abscission-competent VPS4 (VPS4A and/or VPS4B) at the midbody ring until abscission checkpoint signaling is terminated at late cytokinesis. AURKB phosphorylates the CPC complex subunits BIRC5/survivin, CDCA8/borealin and INCENP. Phosphorylation of INCENP leads to increased AURKB activity. Other known AURKB substrates involved in centromeric functions and mitosis are CENPA, DES/desmin, GPAF, KIF2C, NSUN2, RACGAP1, SEPTIN1, VIM/vimentin, HASPIN, and histone H3. A positive feedback loop involving HASPIN and AURKB contributes to localization of CPC to centromeres. Phosphorylation of VIM controls vimentin filament segregation in cytokinetic process, whereas histone H3 is phosphorylated at 'Ser-10' and 'Ser-28' during mitosis (H3S10ph and H3S28ph, respectively). AURKB is also required for kinetochore localization of BUB1 and SGO1. Phosphorylation of p53/TP53 negatively regulates its transcriptional activity. Key regulator of active promoters in resting B- and T-lymphocytes: acts by mediating phosphorylation of H3S28ph at active promoters in resting B-cells, inhibiting RNF2/RING1B-mediated ubiquitination of histone H2A and enhancing binding and activity of the USP16 deubiquitinase at transcribed genes. Acts as an inhibitor of CGAS during mitosis: catalyzes phosphorylation of the N-terminus of CGAS during the G2-M transition, blocking CGAS liquid phase separation and activation, and thereby preventing CGAS-induced autoimmunity. Phosphorylates KRT5 during anaphase and telophase. Phosphorylates ATXN10 which promotes phosphorylation of ATXN10 by PLK1 and may play a role in the regulation of cytokinesis and stimulating the proteasomal degradation of ATXN10. This chain is Aurora kinase B (AURKB), found in Sus scrofa (Pig).